A 525-amino-acid chain; its full sequence is GMP synthase [glutamine-hydrolyzing] (525 aa).

Residues 9–207 enclose the Glutamine amidotransferase type-1 domain; the sequence is RILILDFGSQ…VRDICQCEAL (199 aa). Cys-86 serves as the catalytic Nucleophile. Active-site residues include His-181 and Glu-183. A GMPS ATP-PPase domain is found at 208–400; that stretch reads WTPAKIIDDA…LGLPYDMLYR (193 aa). 235–241 is an ATP binding site; sequence SGGVDSS.

As to quaternary structure, homodimer.

It carries out the reaction XMP + L-glutamine + ATP + H2O = GMP + L-glutamate + AMP + diphosphate + 2 H(+). It functions in the pathway purine metabolism; GMP biosynthesis; GMP from XMP (L-Gln route): step 1/1. In terms of biological role, catalyzes the synthesis of GMP from XMP. The chain is GMP synthase [glutamine-hydrolyzing] from Escherichia coli (strain K12 / MC4100 / BW2952).